The primary structure comprises 800 residues: Cation/H(+) antiporter 9 (800 aa).

Transmembrane regions (helical) follow at residues 43–63, 73–93, 110–130, 145–165, 186–206, 216–236, 247–267, 287–306, 338–358, 371–391, 401–421, and 430–450; these read VIFGYALPLLELQIILIFVCI, IGIPRFVSNILAGLILGPQLL, NVALEGVARLGLVMFTFLMGV, IVIAVSSFFVTMISGLAFRNF, VIVSIQAVTLLPVITHLVYEL, IAISTAAVSDFLGFLTLVCIS, GIANRDIVALIILVLVILFIF, VYLYVTILTAIAASIYLSVF, LVTNIFFPISIAVMAMKADVV, ILLLGLTVVVKWTASFVPCLI, VIIATIMNYKGFVDLCFFDVA, and ATYTVMIIYVLLNAGILPTII.

This sequence belongs to the monovalent cation:proton antiporter 2 (CPA2) transporter (TC 2.A.37) family. CHX (TC 2.A.37.4) subfamily.

The protein resides in the membrane. Functionally, may operate as a cation/H(+) antiporter. The protein is Cation/H(+) antiporter 9 (CHX9) of Arabidopsis thaliana (Mouse-ear cress).